Consider the following 825-residue polypeptide: Breast cancer anti-estrogen resistance protein 3 (825 aa).

An N-acetylalanine modification is found at Ala2. 3 positions are modified to phosphoserine: Ser32, Ser78, and Ser83. Residues 40 to 106 (DAYQDVSIHG…DRHGETFTFR (67 aa)) form a disordered region. The span at 79-94 (PRQNSPVTQDGIQESP) shows a compositional bias: polar residues. A compositionally biased stretch (basic and acidic residues) spans 95–106 (WQDRHGETFTFR). Residues 154 to 253 (WYHGRIPRQV…QSGAIIFQPI (100 aa)) enclose the SH2 domain. A phosphoserine mark is found at Ser182 and Ser290. At Lys334 the chain carries N6-methyllysine. Phosphoserine occurs at positions 358, 363, and 375. Arg442 bears the Omega-N-methylarginine mark. Ser471 is subject to Phosphoserine. The region spanning 548 to 818 (DPKVIAQHVL…TALSRKLEPP (271 aa)) is the Ras-GEF domain. A mediates the interaction with BCAR1/p130CAS region spans residues 744 to 748 (LATAR).

As to quaternary structure, part of a complex comprised of PTPRA, BCAR1, BCAR3 (via SH2 domain) and SRC; the formation of the complex is dependent on integrin mediated-tyrosine phosphorylation of PTPRA. Within the complex, interacts (via SH2 domain) with PTPRA (when phosphorylated on 'Tyr-798'). Interacts (via Ras-GEF domain) with BCAR1. Interacts (via Ras-GEF domain) with NEDD9. Interacts with PTK2/FAK1. Interacts with PTPN1. Interacts (via SH2 domain) with EGFR (when tyrosine-phosphorylated). In terms of processing, phosphorylated on tyrosine residues. Ubiquitously expressed. Found in several cancer cell lines, but not in nonmalignant breast tissue.

It localises to the cytoplasm. The protein localises to the cell junction. The protein resides in the focal adhesion. In terms of biological role, acts as an adapter protein downstream of several growth factor receptors to promote cell proliferation, migration, and redistribution of actin fibers. Specifically involved in INS/insulin signaling pathway by mediating MAPK1/ERK2-MAPK3/ERK1 activation and DNA synthesis. Promotes insulin-mediated membrane ruffling. In response to vasoconstrictor peptide EDN1, involved in the activation of RAP1 downstream of PTK2B via interaction with phosphorylated BCAR1. Inhibits cell migration and invasion via regulation of TGFB-mediated matrix digestion, actin filament rearrangement, and inhibition of invadopodia activity. May inhibit TGFB-SMAD signaling, via facilitating BCAR1 and SMAD2 and/or SMAD3 interaction. Regulates EGF-induced DNA synthesis. Required for the maintenance of ocular lens morphology and structural integrity, potentially via regulation of focal adhesion complex signaling. Acts upstream of PTPRA to regulate the localization of BCAR1 and PTPRA to focal adhesions, via regulation of SRC-mediated phosphorylation of PTPRA. Positively regulates integrin-induced tyrosine phosphorylation of BCAR1. Acts as a guanine nucleotide exchange factor (GEF) for small GTPases RALA, RAP1A and RRAS. However, in a contrasting study, lacks GEF activity towards RAP1. The sequence is that of Breast cancer anti-estrogen resistance protein 3 (BCAR3) from Homo sapiens (Human).